A 715-amino-acid polypeptide reads, in one-letter code: MFSLSSTVQPQVTVPLSHLINAFHSPKNISVSVNTSASPKQHRDTVAEHEAPSSEPVLNLRDLGLSELKIGQIDKLVENLLPGFYKDKRVSSCWHTSHISAQSFFENKYGHLDMFSTLRSSSLYRQHPKTLQSICSDLQNFPVFIQSRGFKTLKSRTRRLQSTSERLAEAQNIAPSFVKGFLLRDRGTDLESLDKLMKTKNIPEAHQDAFKTGFAEGFLKAQALTQKTNDSLRRTRLILFVLLLFGIYGLLKNPFLSVRFRTTTGLDSAVDPVQMKNVTFEHVKGVEEAKQELQEVVEFLKNPQKFTVLGGKLPKGILLVGPPGTGKTLLARAVAGEADVPFYYASGSEFDEMFVGVGASRIRNLFREAKANAPCVIFIDELDSVGGKRIEFPMHPYSRQTIIQLLAEMDGFKPNEGVIIIGATNFPEALDNALIRPGRFDMQVTVPRPDVKGRTEILKWYLNKIKFDKSVDPEIIARGTVGFSGAELENLVNQAALKAAVDGKEMVTMKELEFSKDKILMGPERRSVEIDNKNKTITAYHESGHAIIAYYTKDAMPINKATIMPRGPTLGHVSLLPENDRWNEIRAQLLAQMDVSMGGRVAEELIFGTDHITTGASSDFDNATKIAKRMVTKFGMSEKLGVMTYSDTGKLSPETQSAIEQEIRILLRESYERAKHILKTHAKEHKNLAEALLTYETLDAKEIQIVLEGKKLEVR.

A disordered region spans residues 31-54 (VSVNTSASPKQHRDTVAEHEAPSS). Basic and acidic residues predominate over residues 41–52 (QHRDTVAEHEAP). The chain crosses the membrane as a helical span at residues 238–258 (ILFVLLLFGIYGLLKNPFLSV). Residues Val283, Thr325, Gly326, Lys327, Thr328, and Leu329 each contribute to the ATP site. His541 provides a ligand contact to Zn(2+). The active site involves Glu542. His545 and Asp619 together coordinate Zn(2+).

The protein in the N-terminal section; belongs to the AAA ATPase family. In the C-terminal section; belongs to the peptidase M41 family. As to quaternary structure, homohexamer; may also form heterohexamers. Exists in several complexes of 600-1100 kDa. Interacts with AFG1L. The cofactor is Zn(2+). Proteolytically processed by mitochondrial processing peptidase (MPP) to generate the mature form. Degraded in an OMA1-dependent manner in response to oxidative stress.

The protein resides in the mitochondrion inner membrane. Its subcellular location is the mitochondrion. The enzyme catalyses ATP + H2O = ADP + phosphate + H(+). Functionally, ATP-dependent metalloprotease that catalyzes the degradation of folded and unfolded proteins with a suitable degron sequence in the mitochondrial intermembrane region. Plays an important role in regulating mitochondrial morphology and function by cleaving OPA1 at position S2, giving rise to a form of OPA1 that promotes maintenance of normal mitochondrial structure and mitochondrial protein metabolism. Ensures cell proliferation, maintains normal cristae morphology and complex I respiration activity, promotes antiapoptotic activity and protects mitochondria from the accumulation of oxidatively damaged membrane proteins. Required to control the accumulation of nonassembled respiratory chain subunits (NDUFB6, OX4 and ND1). Involved in the mitochondrial adaptation in response to various signals, such as stress or developmental cues, by mediating degradation of mitochondrial proteins to rewire the mitochondrial proteome. Catalyzes degradation of mitochondrial proteins, such as translocases, lipid transfer proteins and metabolic enzymes in response to nutrient starvation in order to limit mitochondrial biogenesis: mechanistically, YME1L is activated by decreased phosphatidylethanolamine levels caused by LPIN1 activity in response to mTORC1 inhibition. Acts as a regulator of adult neural stem cell self-renewal by promoting mitochondrial proteome rewiring, preserving neural stem and progenitor cells self-renewal. Required for normal, constitutive degradation of PRELID1. Catalyzes the degradation of OMA1 in response to membrane depolarization. Mediates degradation of TIMM17A downstream of the integrated stress response (ISR). Catalyzes degradation of MICU1 when MICU1 is not assembled via an interchain disulfide. The polypeptide is ATP-dependent zinc metalloprotease YME1L1 (Yme1l1) (Rattus norvegicus (Rat)).